We begin with the raw amino-acid sequence, 217 residues long: Non-structural protein NS3 (217 aa).

The protein belongs to the orbivirus NS3 family.

May play a role in the release of virions from infected cells. The protein is Non-structural protein NS3 (Segment-10) of Camelus dromedarius (Dromedary).